The chain runs to 600 residues: Adenine deaminase 4 (600 aa).

It belongs to the metallo-dependent hydrolases superfamily. Adenine deaminase family. Mn(2+) serves as cofactor.

The enzyme catalyses adenine + H2O + H(+) = hypoxanthine + NH4(+). This is Adenine deaminase 4 from Rhizobium meliloti (strain 1021) (Ensifer meliloti).